The following is a 187-amino-acid chain: Transmembrane protein 11-B, mitochondrial (187 aa).

The next 2 helical transmembrane spans lie at 79-95 (TAVL…LALP) and 102-119 (VSLP…LYGI).

It belongs to the TMEM11 family.

Its subcellular location is the mitochondrion inner membrane. Functionally, plays a role in mitochondrial morphogenesis. This Xenopus laevis (African clawed frog) protein is Transmembrane protein 11-B, mitochondrial (tmem11-b).